A 64-amino-acid polypeptide reads, in one-letter code: Small ribosomal subunit protein bS21 (64 aa).

The protein belongs to the bacterial ribosomal protein bS21 family.

The protein is Small ribosomal subunit protein bS21 of Karelsulcia muelleri (strain GWSS) (Sulcia muelleri).